Consider the following 325-residue polypeptide: Small ribosomal subunit biogenesis GTPase RsgA (325 aa).

A CP-type G domain is found at 80–241; the sequence is LSKQIHIIAS…IIDTPGIKGF (162 aa). GTP is bound by residues 129–132 and 183–191; these read NKID and GHSGVGKST. Residues C265, C270, H272, and C278 each contribute to the Zn(2+) site.

This sequence belongs to the TRAFAC class YlqF/YawG GTPase family. RsgA subfamily. In terms of assembly, monomer. Associates with 30S ribosomal subunit, binds 16S rRNA. It depends on Zn(2+) as a cofactor.

It localises to the cytoplasm. One of several proteins that assist in the late maturation steps of the functional core of the 30S ribosomal subunit. Helps release RbfA from mature subunits. May play a role in the assembly of ribosomal proteins into the subunit. Circularly permuted GTPase that catalyzes slow GTP hydrolysis, GTPase activity is stimulated by the 30S ribosomal subunit. In Flavobacterium johnsoniae (strain ATCC 17061 / DSM 2064 / JCM 8514 / BCRC 14874 / CCUG 350202 / NBRC 14942 / NCIMB 11054 / UW101) (Cytophaga johnsonae), this protein is Small ribosomal subunit biogenesis GTPase RsgA.